We begin with the raw amino-acid sequence, 165 residues long: Cyclic pyranopterin monophosphate synthase (165 aa).

Residues 76–78 and 114–115 contribute to the substrate site; these read LCH and ME. Aspartate 129 is a catalytic residue.

Belongs to the MoaC family. Homohexamer; trimer of dimers.

The enzyme catalyses (8S)-3',8-cyclo-7,8-dihydroguanosine 5'-triphosphate = cyclic pyranopterin phosphate + diphosphate. Its pathway is cofactor biosynthesis; molybdopterin biosynthesis. Functionally, catalyzes the conversion of (8S)-3',8-cyclo-7,8-dihydroguanosine 5'-triphosphate to cyclic pyranopterin monophosphate (cPMP). This Brucella abortus (strain 2308) protein is Cyclic pyranopterin monophosphate synthase.